A 165-amino-acid polypeptide reads, in one-letter code: Growth arrest and DNA damage-inducible protein GADD45 alpha (165 aa).

Thr-2 is subject to Phosphothreonine.

The protein belongs to the GADD45 family. In terms of assembly, interacts with AURKA, PCNA, GADD45GIP1 and MAPK14.

It localises to the nucleus. Its function is as follows. Might affect PCNA interaction with some CDK (cell division protein kinase) complexes; stimulates DNA excision repair in vitro and inhibits entry of cells into S phase. In T-cells, functions as a regulator of p38 MAPKs by inhibiting p88 phosphorylation and activity. In Cricetulus griseus (Chinese hamster), this protein is Growth arrest and DNA damage-inducible protein GADD45 alpha (GADD45A).